Reading from the N-terminus, the 207-residue chain is MQNYQQPLRVGVGGPVGSGKTALLEALCKAMRDHYQIAVVTNDIYTKEDQRILTEAGALEPERIVGVETGGCPHTAIREDASMNLAAVEALAKKFGNLEVIFVESGGDNLSATFSPELADLTIYVIDVAEGEKIPRKGGPGITKSDFLVINKTDLAPYVGASLEVMERDTERMRPERPWTFSNLKKGEGLQAVIDFIVERGMLGVRG.

Position 14-21 (14-21 (GPVGSGKT)) interacts with GTP.

Belongs to the SIMIBI class G3E GTPase family. UreG subfamily. In terms of assembly, homodimer. UreD, UreF and UreG form a complex that acts as a GTP-hydrolysis-dependent molecular chaperone, activating the urease apoprotein by helping to assemble the nickel containing metallocenter of UreC. The UreE protein probably delivers the nickel.

It is found in the cytoplasm. Functionally, facilitates the functional incorporation of the urease nickel metallocenter. This process requires GTP hydrolysis, probably effectuated by UreG. The polypeptide is Urease accessory protein UreG (Pseudomonas entomophila (strain L48)).